Reading from the N-terminus, the 358-residue chain is Purine permease 2 (358 aa).

A run of 10 helical transmembrane segments spans residues 6-26 (VLVIINCIFLAIGNCGGPLMM), 37-57 (IWFPSFLQTVGCPLIFFPLLL), 74-94 (FFLMKPPLFIAAIVVGLLVGF), 110-130 (TASLIISAQLGFTALFAFFMV), 134-154 (FTPFTINAIVLLTGGAVVLAL), 170-190 (VVGFIMTLGAALLYGFILPLV), 209-229 (FQMVLCFAATCVCLVGMLAAG), 262-282 (VIVFTAIIWQAFFVGAIGLIF), 288-308 (VSGIMVSALLPVTVILAVICF), and 312-332 (FQAGKGVALALSLWGSVSYFY). The EamA domain maps to 46-154 (VGCPLIFFPL…LTGGAVVLAL (109 aa)).

Belongs to the purine permeases (TC 2.A.7.14) family. As to expression, expressed in the vascular system of leaves. Restricted to the phloem. Expressed in flowers and roots and not detected in stems.

The protein resides in the membrane. With respect to regulation, competitive inhibition of adenine transport by isopentenyladenine, kinetin, benzylaminopurine, trans- and cis-zeatin and trans-zeatin riboside. In terms of biological role, mediates adenine transport. May be involved in the uptake of cytokinin analogs. The sequence is that of Purine permease 2 (PUP2) from Arabidopsis thaliana (Mouse-ear cress).